Reading from the N-terminus, the 286-residue chain is Cytosolic 5'-nucleotidase 3 (286 aa).

The active-site Nucleophile is aspartate 38. Residues aspartate 38 and aspartate 40 each coordinate Mg(2+). Catalysis depends on aspartate 40, which acts as the Proton donor. Substrate-binding positions include glutamate 85, serine 106, 153–154 (SA), and lysine 202. A Mg(2+)-binding site is contributed by aspartate 227.

It belongs to the pyrimidine 5'-nucleotidase family.

The protein resides in the cytoplasm. It carries out the reaction a ribonucleoside 5'-phosphate + H2O = a ribonucleoside + phosphate. In terms of biological role, can act both as nucleotidase and as phosphotransferase. The polypeptide is Cytosolic 5'-nucleotidase 3 (nt5c3) (Danio rerio (Zebrafish)).